The following is a 169-amino-acid chain: Heat shock protein beta-7 (169 aa).

The disordered stretch occupies residues Met1–Asp37. The segment at Met1–Gly70 is required for localization to SC35 splicing speckles. The segment covering Arg16 to Ala32 has biased composition (low complexity). A sHSP domain is found at Pro61–Ile169.

This sequence belongs to the small heat shock protein (HSP20) family. In terms of assembly, interacts with C-terminal domain of actin-binding protein 280. In terms of tissue distribution, found in both cardiac and slow skeletal (soleus) muscle.

It localises to the cytoplasm. The protein localises to the nucleus. The protein resides in the cajal body. The chain is Heat shock protein beta-7 (Hspb7) from Mus musculus (Mouse).